We begin with the raw amino-acid sequence, 200 residues long: Probable GTP-binding protein EngB (200 aa).

Residues 24 to 199 (EGAEVAFAGR…RGVIGGWLGL (176 aa)) form the EngB-type G domain. GTP-binding positions include 32-39 (GRSNAGKS), 59-63 (GRTQQ), 77-80 (DLPG), 144-147 (TKAD), and 178-180 (FSG). Mg(2+) is bound by residues Ser39 and Thr61.

Belongs to the TRAFAC class TrmE-Era-EngA-EngB-Septin-like GTPase superfamily. EngB GTPase family. It depends on Mg(2+) as a cofactor.

Functionally, necessary for normal cell division and for the maintenance of normal septation. The polypeptide is Probable GTP-binding protein EngB (Stenotrophomonas maltophilia (strain K279a)).